Reading from the N-terminus, the 359-residue chain is Peptide chain release factor 1 (359 aa).

Q235 is modified (N5-methylglutamine). The segment at 282–306 (RQRADSERSADRKSQVGSGDRSERI) is disordered.

It belongs to the prokaryotic/mitochondrial release factor family. In terms of processing, methylated by PrmC. Methylation increases the termination efficiency of RF1.

The protein localises to the cytoplasm. In terms of biological role, peptide chain release factor 1 directs the termination of translation in response to the peptide chain termination codons UAG and UAA. The polypeptide is Peptide chain release factor 1 (Rhizobium rhizogenes (strain K84 / ATCC BAA-868) (Agrobacterium radiobacter)).